We begin with the raw amino-acid sequence, 452 residues long: Diphthine methyltransferase (452 aa).

WD repeat units follow at residues 79–130 (PLVE…SHVL), 131–185 (EPLS…RPRL), 186–229 (QKVA…RVPG), 230–273 (KFLF…RNMK), 274–313 (QPLA…LNCQ), 314–403 (KAME…TEGM), and 404–448 (RKNG…HLWE). The residue at position 353 (serine 353) is a Phosphoserine. The interval 371-402 (SELPTPCHECREDNDGEGHARPQSGMKPLTEG) is disordered. The segment covering 378 to 390 (HECREDNDGEGHA) has biased composition (basic and acidic residues).

It belongs to the DPH7 family. As to quaternary structure, interacts with INCA1.

It carries out the reaction diphthine methyl ester-[translation elongation factor 2] + H2O = diphthine-[translation elongation factor 2] + methanol + H(+). It participates in protein modification; peptidyl-diphthamide biosynthesis. Catalyzes the demethylation of diphthine methyl ester to form diphthine, an intermediate diphthamide biosynthesis, a post-translational modification of histidine which occurs in translation elongation factor 2 (EEF2) which can be ADP-ribosylated by diphtheria toxin and by Pseudomonas exotoxin A (Eta). This is Diphthine methyltransferase (DPH7) from Homo sapiens (Human).